We begin with the raw amino-acid sequence, 222 residues long: Orotidine 5'-phosphate decarboxylase (222 aa).

Substrate contacts are provided by residues D11, K30, 59–68, S115, 164–174, G187, and R188; these read DFKLADIGYI and PGMGSQGGSYG. K61 (proton donor) is an active-site residue.

The protein belongs to the OMP decarboxylase family. Type 1 subfamily. Homodimer.

The enzyme catalyses orotidine 5'-phosphate + H(+) = UMP + CO2. The protein operates within pyrimidine metabolism; UMP biosynthesis via de novo pathway; UMP from orotate: step 2/2. In terms of biological role, catalyzes the decarboxylation of orotidine 5'-monophosphate (OMP) to uridine 5'-monophosphate (UMP). The sequence is that of Orotidine 5'-phosphate decarboxylase from Saccharolobus solfataricus (strain ATCC 35092 / DSM 1617 / JCM 11322 / P2) (Sulfolobus solfataricus).